Consider the following 287-residue polypeptide: 4-hydroxybenzoate octaprenyltransferase (287 aa).

Helical transmembrane passes span 22–42 (IGTY…SDGW), 45–65 (LQLL…GCVI), 95–115 (AINL…MLSW), 116–136 (STIY…FMKR), 140–160 (LPQL…FSEA), 162–182 (GEIP…TIAY), 214–234 (IGFL…ILAF), 237–257 (PYQL…LLIV), and 264–284 (CFQA…GIAI).

Belongs to the UbiA prenyltransferase family. It depends on Mg(2+) as a cofactor.

The protein resides in the cell inner membrane. The catalysed reaction is all-trans-octaprenyl diphosphate + 4-hydroxybenzoate = 4-hydroxy-3-(all-trans-octaprenyl)benzoate + diphosphate. Its pathway is cofactor biosynthesis; ubiquinone biosynthesis. In terms of biological role, catalyzes the prenylation of para-hydroxybenzoate (PHB) with an all-trans polyprenyl group. Mediates the second step in the final reaction sequence of ubiquinone-8 (UQ-8) biosynthesis, which is the condensation of the polyisoprenoid side chain with PHB, generating the first membrane-bound Q intermediate 3-octaprenyl-4-hydroxybenzoate. This Colwellia psychrerythraea (strain 34H / ATCC BAA-681) (Vibrio psychroerythus) protein is 4-hydroxybenzoate octaprenyltransferase.